The chain runs to 246 residues: NH(3)-dependent NAD(+) synthetase (246 aa).

29 to 36 (GLSGGIDS) serves as a coordination point for ATP. Aspartate 35 serves as a coordination point for Mg(2+). Position 110 (arginine 110) interacts with deamido-NAD(+). An ATP-binding site is contributed by threonine 130. Glutamate 135 lines the Mg(2+) pocket. Lysine 159 and serine 181 together coordinate ATP.

This sequence belongs to the NAD synthetase family. Homodimer.

It carries out the reaction deamido-NAD(+) + NH4(+) + ATP = AMP + diphosphate + NAD(+) + H(+). Its pathway is cofactor biosynthesis; NAD(+) biosynthesis; NAD(+) from deamido-NAD(+) (ammonia route): step 1/1. Its function is as follows. Catalyzes the ATP-dependent amidation of deamido-NAD to form NAD. Uses ammonia as a nitrogen source. The protein is NH(3)-dependent NAD(+) synthetase of Campylobacter jejuni subsp. jejuni serotype O:6 (strain 81116 / NCTC 11828).